The following is a 439-amino-acid chain: Ornithine aminotransferase, mitochondrial (439 aa).

The transit peptide at 1 to 25 directs the protein to the mitochondrion; that stretch reads MLSKLASLQTIAALRRGVHTSVASA. Residues lysine 49 and lysine 66 each carry the N6-acetyllysine modification. The residue at position 102 (lysine 102) is an N6-succinyllysine. Lysine 107 bears the N6-acetyllysine; alternate mark. The residue at position 107 (lysine 107) is an N6-succinyllysine; alternate. Lysine 292 carries the N6-(pyridoxal phosphate)lysine modification. Position 362 is an N6-acetyllysine; alternate (lysine 362). Lysine 362 carries the post-translational modification N6-succinyllysine; alternate. 2 positions are modified to N6-acetyllysine: lysine 386 and lysine 392. Lysine 405 carries the post-translational modification N6-acetyllysine; alternate. The residue at position 405 (lysine 405) is an N6-succinyllysine; alternate. An N6-acetyllysine modification is found at lysine 421.

Belongs to the class-III pyridoxal-phosphate-dependent aminotransferase family. In terms of assembly, homohexamer. The cofactor is pyridoxal 5'-phosphate.

Its subcellular location is the mitochondrion matrix. The catalysed reaction is L-ornithine + 2-oxoglutarate = L-glutamate 5-semialdehyde + L-glutamate. It participates in amino-acid biosynthesis; L-proline biosynthesis; L-glutamate 5-semialdehyde from L-ornithine: step 1/1. In terms of biological role, catalyzes the reversible interconversion of L-ornithine and 2-oxoglutarate to L-glutamate semialdehyde and L-glutamate. This chain is Ornithine aminotransferase, mitochondrial (Oat), found in Mus musculus (Mouse).